The sequence spans 258 residues: Acetylglutamate kinase (258 aa).

Residues 44–45 (GG), Arg-66, and Asn-158 each bind substrate. ATP is bound by residues 181–186 (DVSGIL) and 209–211 (IIT).

This sequence belongs to the acetylglutamate kinase family. ArgB subfamily. In terms of assembly, homodimer.

It is found in the cytoplasm. The catalysed reaction is N-acetyl-L-glutamate + ATP = N-acetyl-L-glutamyl 5-phosphate + ADP. It participates in amino-acid biosynthesis; L-arginine biosynthesis; N(2)-acetyl-L-ornithine from L-glutamate: step 2/4. Catalyzes the ATP-dependent phosphorylation of N-acetyl-L-glutamate. This is Acetylglutamate kinase from Klebsiella pneumoniae subsp. pneumoniae (strain ATCC 700721 / MGH 78578).